A 322-amino-acid chain; its full sequence is Protein-methionine-sulfoxide reductase catalytic subunit MsrP (322 aa).

Residues Met1–Ala59 constitute a signal peptide (tat-type signal). Residues Asn79, Tyr82–Glu83, Cys137, Thr172, Asn220, Arg225, and Ser236–Lys238 contribute to the Mo-molybdopterin site.

It belongs to the MsrP family. As to quaternary structure, heterodimer of a catalytic subunit (MsrP) and a heme-binding subunit (MsrQ). The cofactor is Mo-molybdopterin. Post-translationally, predicted to be exported by the Tat system. The position of the signal peptide cleavage has not been experimentally proven.

The protein resides in the periplasm. The catalysed reaction is L-methionyl-[protein] + a quinone + H2O = L-methionyl-(S)-S-oxide-[protein] + a quinol. The enzyme catalyses L-methionyl-[protein] + a quinone + H2O = L-methionyl-(R)-S-oxide-[protein] + a quinol. Its function is as follows. Part of the MsrPQ system that repairs oxidized periplasmic proteins containing methionine sulfoxide residues (Met-O), using respiratory chain electrons. Thus protects these proteins from oxidative-stress damage caused by reactive species of oxygen and chlorine generated by the host defense mechanisms. MsrPQ is essential for the maintenance of envelope integrity under bleach stress, rescuing a wide series of structurally unrelated periplasmic proteins from methionine oxidation. The catalytic subunit MsrP is non-stereospecific, being able to reduce both (R-) and (S-) diastereoisomers of methionine sulfoxide. The polypeptide is Protein-methionine-sulfoxide reductase catalytic subunit MsrP (Xanthomonas campestris pv. campestris (strain ATCC 33913 / DSM 3586 / NCPPB 528 / LMG 568 / P 25)).